The chain runs to 252 residues: Phosphosulfolactate synthase (252 aa).

It belongs to the phosphosulfolactate synthase family.

The enzyme catalyses (2R)-O-phospho-3-sulfolactate = phosphoenolpyruvate + sulfite + H(+). In terms of biological role, catalyzes the addition of sulfite to phosphoenolpyruvate (PEP) to yield (2R)-phospho-3-sulfolactate (PSL). Is probably involved in the biosynthesis of L-sulfolactate, which is a major constituent of sporulating cells and mature spores. The sequence is that of Phosphosulfolactate synthase (yitD) from Bacillus subtilis (strain 168).